A 156-amino-acid chain; its full sequence is Peptide methionine sulfoxide reductase MsrA (156 aa).

Cysteine 10 is a catalytic residue.

This sequence belongs to the MsrA Met sulfoxide reductase family.

It catalyses the reaction L-methionyl-[protein] + [thioredoxin]-disulfide + H2O = L-methionyl-(S)-S-oxide-[protein] + [thioredoxin]-dithiol. The catalysed reaction is [thioredoxin]-disulfide + L-methionine + H2O = L-methionine (S)-S-oxide + [thioredoxin]-dithiol. Its function is as follows. Has an important function as a repair enzyme for proteins that have been inactivated by oxidation. Catalyzes the reversible oxidation-reduction of methionine sulfoxide in proteins to methionine. This Metamycoplasma arthritidis (strain 158L3-1) (Mycoplasma arthritidis) protein is Peptide methionine sulfoxide reductase MsrA.